Reading from the N-terminus, the 484-residue chain is Aldehyde dehydrogenase family 3 member A2 (484 aa).

Topologically, residues 1–463 (MERQVQRLRQ…FLLKQFNKGR (463 aa)) are cytoplasmic. 185-190 (GNTAVG) contacts NAD(+). Residues E207 and C241 contribute to the active site. Residue S293 is modified to Phosphoserine. The chain crosses the membrane as a helical span at residues 464-484 (LQLLLLVCLVAVAAVIVKDQL). The short motif at 481–484 (KDQL) is the Prevents secretion from ER element.

The protein belongs to the aldehyde dehydrogenase family. As to quaternary structure, homodimer. Post-translationally, the N-terminus is blocked.

It localises to the microsome membrane. The protein resides in the endoplasmic reticulum membrane. It carries out the reaction an aldehyde + NAD(+) + H2O = a carboxylate + NADH + 2 H(+). The catalysed reaction is a fatty aldehyde + NAD(+) + H2O = a fatty acid + NADH + 2 H(+). It catalyses the reaction (2E)-hexadecenal + NAD(+) + H2O = (E)-hexadec-2-enoate + NADH + 2 H(+). The enzyme catalyses hexadecanoate + NADH + 2 H(+) = hexadecanal + NAD(+) + H2O. It carries out the reaction 22-oxodocosanoate + NAD(+) + H2O = docosanedioate + NADH + 2 H(+). The catalysed reaction is 2,6,10,14-tetramethylpentadecanal + NAD(+) + H2O = 2,6,10,14-tetramethylpentadecanoate + NADH + 2 H(+). It catalyses the reaction octadecanal + NAD(+) + H2O = octadecanoate + NADH + 2 H(+). The enzyme catalyses dodecanoate + NADH + 2 H(+) = dodecanal + NAD(+) + H2O. It carries out the reaction decanal + NAD(+) + H2O = decanoate + NADH + 2 H(+). The catalysed reaction is tetradecanal + NAD(+) + H2O = tetradecanoate + NADH + 2 H(+). It catalyses the reaction octanal + NAD(+) + H2O = octanoate + NADH + 2 H(+). The enzyme catalyses heptanal + NAD(+) + H2O = heptanoate + NADH + 2 H(+). It carries out the reaction (2E,6E)-farnesal + NAD(+) + H2O = (2E,6E)-farnesoate + NADH + 2 H(+). Catalyzes the oxidation of medium and long-chain aliphatic aldehydes to fatty acids. Active on a variety of saturated and unsaturated aliphatic aldehydes between 6 and 24 carbons in length. Responsible for conversion of the sphingosine 1-phosphate (S1P) degradation product hexadecenal to hexadecenoic acid. The protein is Aldehyde dehydrogenase family 3 member A2 (Aldh3a2) of Rattus norvegicus (Rat).